The chain runs to 201 residues: Large ribosomal subunit protein bL25 (201 aa).

This sequence belongs to the bacterial ribosomal protein bL25 family. CTC subfamily. Part of the 50S ribosomal subunit; part of the 5S rRNA/L5/L18/L25 subcomplex. Contacts the 5S rRNA. Binds to the 5S rRNA independently of L5 and L18.

In terms of biological role, this is one of the proteins that binds to the 5S RNA in the ribosome where it forms part of the central protuberance. The chain is Large ribosomal subunit protein bL25 from Burkholderia lata (strain ATCC 17760 / DSM 23089 / LMG 22485 / NCIMB 9086 / R18194 / 383).